Reading from the N-terminus, the 109-residue chain is Fluorescence recovery protein (109 aa).

In terms of assembly, probably a dimer, interacts with the C-terminal domain of OCP-R.

Its subcellular location is the cellular thylakoid membrane. Functionally, destabilizes orange carotenoid protein-R form (OCP-R), the FRP-OCP interaction accelerates the OCP-R to OCP-O conversion. Increases fluorescence recovery following non-photochemical quenching (NPQ) by OCP, most probably by destabilizing OCP-R binding to the phycobilisome core. The chain is Fluorescence recovery protein (frp) from Synechocystis sp. (strain ATCC 27184 / PCC 6803 / Kazusa).